Reading from the N-terminus, the 202-residue chain is Small ribosomal subunit protein uS4 (202 aa).

Residues 1–13 (MSRYRGPRLRVTR) are compositionally biased toward basic residues. Residues 1–42 (MSRYRGPRLRVTRRLGELPGLTRKASKKSNPPGQHGQARRKR) form a disordered region. In terms of domain architecture, S4 RNA-binding spans 90-152 (NRLDNVCFRL…KASKKLVEGN (63 aa)).

The protein belongs to the universal ribosomal protein uS4 family. Part of the 30S ribosomal subunit. Contacts protein S5. The interaction surface between S4 and S5 is involved in control of translational fidelity.

Its function is as follows. One of the primary rRNA binding proteins, it binds directly to 16S rRNA where it nucleates assembly of the body of the 30S subunit. Functionally, with S5 and S12 plays an important role in translational accuracy. The protein is Small ribosomal subunit protein uS4 of Prochlorococcus marinus (strain AS9601).